The following is a 234-amino-acid chain: Membrane glycoprotein RL11 (234 aa).

A signal peptide spans 1-23 (MQTYSTPLTLIIVTSLFLFTTQG). Residues 183 to 203 (LHCAWVSGLMIFVGALVICFL) traverse the membrane as a helical segment.

It localises to the host membrane. In Human cytomegalovirus (strain Merlin) (HHV-5), this protein is Membrane glycoprotein RL11 (RL11).